The following is a 701-amino-acid chain: Translation factor GUF1, mitochondrial (701 aa).

The N-terminal 29 residues, 1 to 29, are a transit peptide targeting the mitochondrion; sequence MSCCKGLTPQCVRVRLPRRPALSHPARLY. Residues 23 to 50 show a composition bias toward low complexity; sequence SHPARLYSSSSSSNSHSSPSRPRLLSRP. A disordered region spans residues 23 to 85; the sequence is SHPARLYSSS…RSSHHSSAPM (63 aa). Positions 98–283 constitute a tr-type G domain; it reads ERYRNFCVIA…AVIEQIPHPT (186 aa). Residues 107–114, 172–176, and 226–229 contribute to the GTP site; these read AHVDHGKS, DTPGH, and NKID.

This sequence belongs to the TRAFAC class translation factor GTPase superfamily. Classic translation factor GTPase family. LepA subfamily.

It localises to the mitochondrion inner membrane. The enzyme catalyses GTP + H2O = GDP + phosphate + H(+). Promotes mitochondrial protein synthesis. May act as a fidelity factor of the translation reaction, by catalyzing a one-codon backward translocation of tRNAs on improperly translocated ribosomes. Binds to mitochondrial ribosomes in a GTP-dependent manner. This Pyricularia oryzae (strain 70-15 / ATCC MYA-4617 / FGSC 8958) (Rice blast fungus) protein is Translation factor GUF1, mitochondrial.